The chain runs to 3256 residues: Proliferation marker protein Ki-67 (3256 aa).

An FHA domain is found at 27–76; sequence CLFGRGIECDIRIQLPVVSKQHCKIEIHEQEAILHNFSSTNPTQVNGSVI. The tract at residues 101-199 is disordered; sequence SLQNGRKSTE…RNGRNAADPI (99 aa). Positions 107–122 are enriched in basic and acidic residues; it reads KSTEFPRKIREQEPAR. Phosphoserine occurs at positions 125, 128, and 166. Basic and acidic residues predominate over residues 161-173; sequence NVKEDSTADDSKD. Over residues 174 to 183 the composition is skewed to polar residues; it reads SVAQGTTNVH. Lys-245 participates in a covalent cross-link: Glycyl lysine isopeptide (Lys-Gly) (interchain with G-Cter in SUMO2). 3 positions are modified to phosphoserine: Ser-264, Ser-296, and Ser-308. Disordered stretches follow at residues 271 to 426 and 513 to 542; these read ATEK…RGSI and RPEL…LVMH. Residues 314 to 324 show a composition bias toward basic and acidic residues; it reads DQNKGKGRDVE. Thr-328 and Thr-347 each carry phosphothreonine. Positions 349–358 are enriched in polar residues; that stretch reads VQYSQQQNSP. Residues Ser-352, Ser-357, and Ser-374 each carry the phosphoserine modification. Thr-401 is subject to Phosphothreonine. At Ser-411 the chain carries Phosphoserine. A compositionally biased stretch (polar residues) spans 414–425; that stretch reads KPENLSSKTRGS. The tract at residues 495–678 is positively charged patch (CP); that stretch reads ESEGIPLKRR…AKQTQTKVIK (184 aa). The PP1-binding domain maps to 502 to 549; the sequence is KRRRVSFGGHLRPELFDENLPPNTPLKRGEAPTKRKSLVMHTPPVLKK. At Ser-538 the chain carries Phosphoserine. The residue at position 543 (Thr-543) is a Phosphothreonine. The interval 575–632 is disordered; the sequence is SLVISPPAPSPRKTPVASDQRRRSCKTAPASSSKSQTEVPKRGGRKSGNLPSKRVSIS. 2 positions are modified to phosphoserine: Ser-579 and Ser-584. Residues 603–612 are compositionally biased toward polar residues; that stretch reads PASSSKSQTE. Ser-648 carries the phosphoserine modification. A disordered region spans residues 674–707; the sequence is TKVIKHGPQRSMNKRQRRPATPKKPVGEVHSQFS. The segment covering 676–694 has biased composition (basic residues); sequence VIKHGPQRSMNKRQRRPAT. A Phosphothreonine modification is found at Thr-761. A disordered region spans residues 853–886; that stretch reads SLETKTSDTETEPSKTVSTANRSGRSTEFRNIQK. The residue at position 859 (Ser-859) is a Phosphoserine. A compositionally biased stretch (polar residues) spans 866–882; sequence SKTVSTANRSGRSTEFR. Positions 1000-2928 are 16 X 122 AA approximate repeats; the sequence is GKITKMPCQS…ASFQELSQTP (1929 aa). K167R repeat units follow at residues 1001–1112, 1123–1234, 1245–1356, 1367–1477, 1488–1597, and 1609–1720; these read KITK…FQTP, KTTK…FQTP, KTTK…LFQT, and KTAK…FQTP. A Phosphothreonine modification is found at Thr-1017. Residues Lys-1022 and Lys-1035 each participate in a glycyl lysine isopeptide (Lys-Gly) (interchain with G-Cter in SUMO2) cross-link. A disordered region spans residues 1045–1073; the sequence is TRTSGETTHTHREPAGDGKSIRTFKESPK. The segment covering 1052–1072 has biased composition (basic and acidic residues); sequence THTHREPAGDGKSIRTFKESP. Ser-1071 carries the phosphoserine modification. A Phosphothreonine modification is found at Thr-1091. Residue Lys-1093 forms a Glycyl lysine isopeptide (Lys-Gly) (interchain with G-Cter in SUMO1); alternate linkage. Lys-1093 participates in a covalent cross-link: Glycyl lysine isopeptide (Lys-Gly) (interchain with G-Cter in SUMO2); alternate. Phosphoserine is present on Ser-1098. The tract at residues 1109 to 1151 is disordered; sequence FQTPGPSEESMTDEKTTKIACKSPPPESVDTPTSTKQWPKRSL. Residue Thr-1111 is modified to Phosphothreonine. A Phosphoserine modification is found at Ser-1131. The residue at position 1139 (Thr-1139) is a Phosphothreonine. The residue at position 1142 (Ser-1142) is a Phosphoserine. Thr-1167 is subject to Phosphothreonine. Ser-1169 carries the phosphoserine modification. Thr-1176 is subject to Phosphothreonine. Residues Lys-1185 and Lys-1188 each participate in a glycyl lysine isopeptide (Lys-Gly) (interchain with G-Cter in SUMO2) cross-link. The residue at position 1193 (Thr-1193) is a Phosphothreonine. The residue at position 1207 (Ser-1207) is a Phosphoserine. The residue at position 1233 (Thr-1233) is a Phosphothreonine. Residues 1246–1276 are disordered; the sequence is TTKIPCDSPQSDPVDTPTSTKQRPKRSIRKA. A phosphoserine mark is found at Ser-1253 and Ser-1256. Residues 1253–1266 show a composition bias toward polar residues; the sequence is SPQSDPVDTPTSTK. Phosphothreonine is present on residues Thr-1261, Thr-1298, Thr-1315, and Thr-1327. The disordered stretch occupies residues 1323–1518; it reads TENLTGSKRR…PQSKRSLRKV (196 aa). At Ser-1329 the chain carries Phosphoserine. Residue Thr-1335 is modified to Phosphothreonine. Lys-1337 participates in a covalent cross-link: Glycyl lysine isopeptide (Lys-Gly) (interchain with G-Cter in SUMO2). Thr-1355 is subject to Phosphothreonine. Ser-1376 is subject to Phosphoserine. Residue Thr-1383 is modified to Phosphothreonine. Ser-1386 is subject to Phosphoserine. Composition is skewed to basic and acidic residues over residues 1394–1406 and 1418–1442; these read PLEK…ELSA and THTD…KQKL. Phosphothreonine occurs at positions 1420 and 1437. Ser-1496 is modified (phosphoserine). The residue at position 1503 (Thr-1503) is a Phosphothreonine. Position 1506 is a phosphoserine (Ser-1506). Thr-1540 carries the phosphothreonine modification. Residue Tyr-1552 is modified to Phosphotyrosine. Phosphothreonine occurs at positions 1557 and 1569. Phosphoserine is present on residues Ser-1571 and Ser-1617. Residues 1597–1675 are disordered; sequence TRGHTEESMT…PTGDGKSMKA (79 aa). Residue Lys-1639 is modified to N6-acetyllysine. Residue Lys-1643 forms a Glycyl lysine isopeptide (Lys-Gly) (interchain with G-Cter in SUMO2) linkage. Over residues 1660 to 1672 the composition is skewed to basic and acidic residues; the sequence is THTHTEPTGDGKS. Ser-1679 and Ser-1689 each carry phosphoserine. Disordered regions lie at residues 1689–1708, 1717–1765, 1771–1790, 1801–1824, and 1839–1886; these read SLTG…EVPE, FQTP…ADTE, FRKQ…PAVG, TPVQ…TRKE, and FQTP…KADV. Lys-1703 participates in a covalent cross-link: Glycyl lysine isopeptide (Lys-Gly) (interchain with G-Cter in SUMO2). Residue Thr-1719 is modified to Phosphothreonine. Residue Ser-1721 is modified to Phosphoserine. The span at 1722-1733 shows a compositional bias: basic and acidic residues; the sequence is HTKESMTNEKTT. K167R repeat units follow at residues 1731–1842, 1854–1964, 1975–2086, 2097–2204, and 2215–2326; these read KTTK…FQTP, TKKI…FQTP, and KITE…FQTP. A Phosphoserine modification is found at Ser-1740. A phosphothreonine mark is found at Thr-1747, Thr-1764, Thr-1784, and Thr-1801. Ser-1815 carries the post-translational modification Phosphoserine. Position 1841 is a phosphothreonine (Thr-1841). Phosphoserine is present on residues Ser-1861 and Ser-1864. A compositionally biased stretch (polar residues) spans 1861–1874; that stretch reads SPQSDPADTPTNTK. A phosphothreonine mark is found at Thr-1869, Thr-1897, Thr-1906, and Thr-1923. At Ser-1937 the chain carries Phosphoserine. The disordered stretch occupies residues 1961-2002; it reads FQTPGHTEESMTDDKITEVSCKSPQPDPVKTPTSSKQRLKIS. Position 1963 is a phosphothreonine (Thr-1963). Residues 1966-1977 are compositionally biased toward basic and acidic residues; the sequence is HTEESMTDDKIT. Ser-1983 is subject to Phosphoserine. The residue at position 2005 (Lys-2005) is an N6-acetyllysine. A Glycyl lysine isopeptide (Lys-Gly) (interchain with G-Cter in SUMO1); alternate cross-link involves residue Lys-2009. Lys-2009 participates in a covalent cross-link: Glycyl lysine isopeptide (Lys-Gly) (interchain with G-Cter in SUMO2); alternate. The disordered stretch occupies residues 2017–2192; sequence KLTQTSGKTT…TPKGKAQPLE (176 aa). Phosphothreonine occurs at positions 2028 and 2065. Basic and acidic residues-rich tracts occupy residues 2028-2046 and 2061-2070; these read THRE…KESA and RWPRTPKEEA. Residue Lys-2067 forms a Glycyl lysine isopeptide (Lys-Gly) (interchain with G-Cter in SUMO1); alternate linkage. A Glycyl lysine isopeptide (Lys-Gly) (interchain with G-Cter in SUMO2); alternate cross-link involves residue Lys-2067. Ser-2072 is subject to Phosphoserine. Thr-2085 carries the post-translational modification Phosphothreonine. A compositionally biased stretch (basic and acidic residues) spans 2087–2099; the sequence is DHTEESTTDDKTT. Ser-2105 carries the post-translational modification Phosphoserine. Phosphothreonine is present on Thr-2113. A phosphoserine mark is found at Ser-2116 and Ser-2135. A compositionally biased stretch (basic and acidic residues) spans 2145-2168; that stretch reads HTDKVPGDEDKGINVFRETAKQKL. 3 positions are modified to phosphothreonine: Thr-2146, Thr-2163, and Thr-2203. Residues 2205-2400 are disordered; it reads ICTDKPTTHE…KPAVSDEKNI (196 aa). Residue Ser-2223 is modified to Phosphoserine. Phosphothreonine occurs at positions 2231 and 2233. Residue Ser-2239 is modified to Phosphoserine. The residue at position 2259 (Thr-2259) is a Phosphothreonine. Phosphoserine is present on Ser-2261. 5 positions are modified to phosphothreonine: Thr-2268, Thr-2285, Thr-2325, Thr-2328, and Thr-2333. K167R repeat units lie at residues 2336-2447, 2458-2569, 2580-2688, 2700-2805, and 2819-2928; these read KTTK…FQTP, KITE…FSAP, KNTK…LSET, KATK…GFKD, and KTTK…SQTP. Residue Ser-2344 is modified to Phosphoserine. Phosphothreonine occurs at positions 2352 and 2389. Residue Ser-2395 is modified to Phosphoserine. At Thr-2406 the chain carries Phosphothreonine. Phosphoserine is present on Ser-2420. Thr-2426 and Thr-2446 each carry phosphothreonine. Residues 2445–2480 are disordered; that stretch reads QTPGHTEESMTDDKITEVSCKSPQPESFKTSRSSKQ. Basic and acidic residues predominate over residues 2449 to 2460; it reads HTEESMTDDKIT. The segment covering 2463 to 2475 has biased composition (polar residues); that stretch reads SCKSPQPESFKTS. A Phosphoserine modification is found at Ser-2466. A Glycyl lysine isopeptide (Lys-Gly) (interchain with G-Cter in SUMO1) cross-link involves residue Lys-2492. Residues 2497-2521 are disordered; it reads AVSKLTRTSGETTQTHTEPTGDSKS. Polar residues predominate over residues 2501 to 2514; the sequence is LTRTSGETTQTHTE. A phosphoserine mark is found at Ser-2505, Ser-2528, and Ser-2588. Residues 2570–3256 form a disordered region; that stretch reads GHTEESMTID…TRSHRDSEDI (687 aa). Basic and acidic residues-rich tracts occupy residues 2609 to 2618, 2632 to 2644, and 2660 to 2675; these read RKEVKEELSA, THKE…EGIK, and EPSR…KAQP. Lys-2613 is covalently cross-linked (Glycyl lysine isopeptide (Lys-Gly) (interchain with G-Cter in SUMO1); alternate). Lys-2613 participates in a covalent cross-link: Glycyl lysine isopeptide (Lys-Gly) (interchain with G-Cter in SUMO2); alternate. Ser-2638 is subject to Phosphoserine. Positions 2685 to 2696 are enriched in polar residues; sequence LSETSGHTQESL. Ser-2708 bears the Phosphoserine mark. Lys-2734 is covalently cross-linked (Glycyl lysine isopeptide (Lys-Gly) (interchain with G-Cter in SUMO1); alternate). Lys-2734 is covalently cross-linked (Glycyl lysine isopeptide (Lys-Gly) (interchain with G-Cter in SUMO2); alternate). Basic and acidic residues-rich tracts occupy residues 2751–2770 and 2810–2821; these read DADK…KESA and HTEESMTDDKTT. A phosphoserine mark is found at Ser-2827, Ser-2828, and Ser-2838. A Glycyl lysine isopeptide (Lys-Gly) (interchain with G-Cter in SUMO1); alternate cross-link involves residue Lys-2852. Lys-2852 participates in a covalent cross-link: Glycyl lysine isopeptide (Lys-Gly) (interchain with G-Cter in SUMO2); alternate. Over residues 2869–2881 the composition is skewed to basic and acidic residues; the sequence is THTDKEPVGEGKG. Polar residues predominate over residues 2941 to 2951; that stretch reads SFTSAPKQTPD. Lys-2967 is covalently cross-linked (Glycyl lysine isopeptide (Lys-Gly) (interchain with G-Cter in SUMO2)). Residues 2982 to 2991 are compositionally biased toward polar residues; sequence KSQSKSNTSL. Position 2986 is an N6-acetyllysine (Lys-2986). A compositionally biased stretch (basic residues) spans 3029–3039; it reads KKQRVAPRARG. ATP is bound at residue 3034–3041; that stretch reads APRARGKS. Residue Ser-3041 is modified to Phosphoserine. 2 stretches are compositionally biased toward basic and acidic residues: residues 3071–3080 and 3113–3124; these read KTNKEEHKLQ and ERIEINRNEKKP. Ser-3128 carries the phosphoserine modification. A compositionally biased stretch (basic and acidic residues) spans 3138–3154; that stretch reads DGARKPIPRDKVTENKR. The segment covering 3207 to 3223 has biased composition (polar residues); sequence SQPAASTLESKSVQRVT. Basic and acidic residues predominate over residues 3228 to 3241; sequence RCAENPKKAEDNVC.

Interacts with KIF15. Interacts (via the FHA domain) with NIFK. Interacts with PPP1CC. Component of a complex at least composed of ZNF335, HCFC1, CCAR2, EMSY, MKI67, RBBP5, ASH2L and WDR5; the complex is formed as a result of interactions between components of a nuclear receptor-mediated transcription complex and a histone methylation complex. Interacts with ZNF335. Post-translationally, hyperphosphorylated by CDK1 in mitosis; hyperphosphorylatiom prevents undergoing liquid-liquid phase separation. Dephosphorylated by PPP1CC at the onset of anaphase. Dephosphorylated by protein phosphatase 2A (PP2A) at the onset of anaphase. Dephosphorylation by protein phosphatase 2A (PP2A) and simultaneous exposure of the positively charged patch (CP) during mitotic exit induce the RNA-dependent formation of a liquid-like condensed phase on the chromosome surface. Ubiquitinated by the APC/C complex after neuronal progenitors exit mitosis during brain development, leading to clearance from constitutive heterochromatin.

The protein resides in the chromosome. The protein localises to the nucleus. Its subcellular location is the nucleolus. Protein that associates with the surface of mitotic chromosomes and acts both as a chromosome repellent during early mitosis and chromosome attractant during late mitosis. Required to maintain individual mitotic chromosomes dispersed in the cytoplasm following nuclear envelope disassembly. During early mitosis, relocalizes from nucleoli to the chromosome surface where it forms extended brush structures that cover a substantial fraction of the chromosome surface. The MKI67 brush structure prevents chromosomes from collapsing into a single chromatin mass by forming a steric and electrostatic charge barrier: the protein has a high net electrical charge and acts as a surfactant, dispersing chromosomes and enabling independent chromosome motility. During mitotic anaphase, the MKI67 brush structure collapses and MKI67 switches from a chromosome repellent to a chromosome attractant to promote chromosome clustering and facilitate the exclusion of large cytoplasmic particles from the future nuclear space. Mechanistically, dephosphorylation during mitotic exit and simultaneous exposure of a conserved basic patch induce the RNA-dependent formation of a liquid-like condensed phase on the chromosome surface, promoting coalescence of neighboring chromosome surfaces and clustering of chromosomes. Binds premature ribosomal RNAs during anaphase; promoting liquid-liquid phase separation. Binds DNA, with a preference for supercoiled DNA and AT-rich DNA. Does not contribute to the internal structure of mitotic chromosomes. May play a role in chromatin organization; it is however unclear whether it plays a direct role in chromatin organization or whether it is an indirect consequence of its function in mitotic chromosome. This chain is Proliferation marker protein Ki-67, found in Homo sapiens (Human).